A 1424-amino-acid polypeptide reads, in one-letter code: ABC multidrug transporter H (1424 aa).

The interval 1–49 (MEDQGHLPSEPRALFDRRDDTDSTNTALDETDLSRTPLQDTSHTPHAED) is disordered. Positions 23-42 (STNTALDETDLSRTPLQDTS) are enriched in polar residues. N-linked (GlcNAc...) asparagine glycosylation is found at N79 and N275. An ABC transporter 1 domain is found at 96 to 351 (LSQFNIPQHI…MEEQGFVCRE (256 aa)). A run of 7 helical transmembrane segments spans residues 488–508 (GLFIKSGALFFSLLYNSLLAM), 520–540 (VLIKHKYFAFFHPAAFCIAQI), 544–564 (IPVLLFQISMFAVVVYFMVGL), 569–589 (GAFFSYWIIIFVATMVMTALF), 605–625 (VSGFLISALIMYCGYLEPYHA), 629–649 (WFIWIYWINPLAYAFDALLSI), and 710–730 (NFGILWAWWALFVAVTIIATS). The tract at residues 760–782 (EEAQLNEKAGHKGTGTDSEAQSN) is disordered. N-linked (GlcNAc...) asparagine glycans are attached at residues N790 and N798. Residues 794 to 1037 (FTWKNLTYTV…VKDYFARYGA (244 aa)) enclose the ABC transporter 2 domain. Residue 830-837 (GSSGAGKT) participates in ATP binding. 4 helical membrane-spanning segments follow: residues 1131 to 1151 (IALHIGSALFNGFSFWMIGDS), 1161 to 1181 (TIFNFIFVAPGVINQLQPLFI), 1200 to 1220 (VAFVTALIVSEFPYLCVCAVL), and 1240 to 1260 (AIFFIMLCYEFLYTGIGQFIA). Residue N1265 is glycosylated (N-linked (GlcNAc...) asparagine). Helical transmembrane passes span 1268 to 1288 (FAALTNPLILGTLVSFCGVLV) and 1300 to 1320 (WIYWLNPFNYLMGSMLVFSVF). N-linked (GlcNAc...) asparagine glycosylation occurs at N1338. A helical membrane pass occupies residues 1395–1415 (TAIVCIFVLSSYALVYALMKL).

This sequence belongs to the ABC transporter superfamily. ABCG family. PDR (TC 3.A.1.205) subfamily.

It is found in the cell membrane. Its activity is regulated as follows. The efflux inhibitor FK506 impairs the transport activity. ABC efflux transporter that is able to transport rhodamine 6G (R-6G), a known substrate for many ABC transporters, but seems not to transport azoles. This chain is ABC multidrug transporter H, found in Aspergillus fumigatus (strain ATCC MYA-4609 / CBS 101355 / FGSC A1100 / Af293) (Neosartorya fumigata).